Here is a 76-residue protein sequence, read N- to C-terminus: MATFDKVKDIVVDQLGVDEDQVTMEANFTEDLEADSLDIVELIMAMEEEFDMEISDEEAEKMSTVGDVVNYIEQNQ.

The Carrier domain occupies 1 to 76; sequence MATFDKVKDI…DVVNYIEQNQ (76 aa). O-(pantetheine 4'-phosphoryl)serine is present on Ser-36.

The protein belongs to the acyl carrier protein (ACP) family. Post-translationally, 4'-phosphopantetheine is transferred from CoA to a specific serine of apo-ACP by AcpS. This modification is essential for activity because fatty acids are bound in thioester linkage to the sulfhydryl of the prosthetic group.

It localises to the cytoplasm. It functions in the pathway lipid metabolism; fatty acid biosynthesis. In terms of biological role, carrier of the growing fatty acid chain in fatty acid biosynthesis. The polypeptide is Acyl carrier protein (Natranaerobius thermophilus (strain ATCC BAA-1301 / DSM 18059 / JW/NM-WN-LF)).